Reading from the N-terminus, the 556-residue chain is Bifunctional methyltransferase (556 aa).

Residues 1–310 (MQYSIQKFLN…NRVIEISLIQ (310 aa)) are RF MTase. Residues 148-152 (GTGSG), Asp171, Trp200, and Asn215 contribute to the S-adenosyl-L-methionine site. Residue 215 to 218 (NPPY) participates in substrate binding. Residues 313-556 (RSYARRIGKS…IITKIPPKSY (244 aa)) form a tRNA MTase region. The segment at 348-399 (KNYNSCKIKSNYTKFNLEKSKESVSRGAERIKIREHLRTYKEDVANFSSSTS) is insert. Positions 403, 428, 455, and 477 each coordinate S-adenosyl-L-methionine. Asp477 is a catalytic residue. Substrate contacts are provided by Lys481 and Asp513.

In the C-terminal section; belongs to the class I-like SAM-binding methyltransferase superfamily. TrmB family. This sequence in the N-terminal section; belongs to the protein N5-glutamine methyltransferase family. PrmC subfamily.

The enzyme catalyses L-glutaminyl-[peptide chain release factor] + S-adenosyl-L-methionine = N(5)-methyl-L-glutaminyl-[peptide chain release factor] + S-adenosyl-L-homocysteine + H(+). It carries out the reaction guanosine(46) in tRNA + S-adenosyl-L-methionine = N(7)-methylguanosine(46) in tRNA + S-adenosyl-L-homocysteine. Functionally, methylates the class 1 translation termination release factors RF1/PrfA and RF2/PrfB on the glutamine residue of the universally conserved GGQ motif. In terms of biological role, catalyzes the formation of N(7)-methylguanine at position 46 (m7G46) in tRNA. The chain is Bifunctional methyltransferase (prmC/trmB) from Rickettsia bellii (strain RML369-C).